The following is a 1193-amino-acid chain: Probable cation-transporting ATPase 13A4 (1193 aa).

Over 1–32 (MGDHLEKSQHALLNEGDENEMEIFGYRTQGCR) the chain is Cytoplasmic. An intramembrane segment occupies 33–53 (KALCLIGSIFSLGMLPLVFYW). The Cytoplasmic portion of the chain corresponds to 54–198 (RPAWRVWANC…DVEITPIWKL (145 aa)). A helical transmembrane segment spans residues 199–219 (LIKEVLNPFYIFQLFSVCLWF). Topologically, residues 220-224 (SEDYK) are lumenal. A helical transmembrane segment spans residues 225-245 (EYALAIILMSVISIALTVYDL). The Cytoplasmic portion of the chain corresponds to 246–401 (RQQSVKLHHL…NFKLYRDAIR (156 aa)). Residues 402-422 (FLLCLVGTATIGMVYTLCVYV) traverse the membrane as a helical segment. Topologically, residues 423–437 (LSGEPPEEVVRKALD) are lumenal. Residues 438–458 (VITIAVPPALPAALTTGIIYA) form a helical membrane-spanning segment. Residues 459–901 (QRRLKKKGIF…KEGRAALVTS (443 aa)) lie on the Cytoplasmic side of the membrane. The active-site 4-aspartylphosphate intermediate is the aspartate 487. 2 residues coordinate Mg(2+): aspartate 849 and aspartate 853. A helical transmembrane segment spans residues 902 to 922 (FCMFKYMALYSMIQYVGVLLL). The Lumenal portion of the chain corresponds to 923–933 (YWKTNSLSNYQ). Residues 934–954 (FLFQDLAITTLIGVTMNLNGA) traverse the membrane as a helical segment. Over 955–973 (NPKLVPFRPAGRLISPPLL) the chain is Cytoplasmic. Residues 974-994 (LSVVLNILLSLAMHIVGFILV) form a helical membrane-spanning segment. Residues 995–1036 (QKQPWYIMDYHSVCPVRNESASALAASPSVPEKTRSNSTFAS) lie on the Lumenal side of the membrane. Residues 1037–1057 (FENTTIWFLGTINCIFVALVF) traverse the membrane as a helical segment. Topologically, residues 1058–1071 (SKGKPFRQPTYTNY) are cytoplasmic. The chain crosses the membrane as a helical span at residues 1072–1092 (IFVLVLILQMGVCLFILFADI). The Lumenal segment spans residues 1093-1105 (PEMHRRLDLLCTP). A helical transmembrane segment spans residues 1106 to 1126 (VLWRVYILIMISSNFVVSLAV). Residues 1127-1193 (EKAIIENRAL…PVFESNEEQL (67 aa)) lie on the Cytoplasmic side of the membrane.

It belongs to the cation transport ATPase (P-type) (TC 3.A.3) family. Type V subfamily. Expressed in brain and stomach.

Its subcellular location is the early endosome membrane. The protein localises to the late endosome membrane. It localises to the recycling endosome membrane. It catalyses the reaction ATP + H2O = ADP + phosphate + H(+). In Mus musculus (Mouse), this protein is Probable cation-transporting ATPase 13A4 (Atp13a4).